The chain runs to 117 residues: Modulator protein MzrA (117 aa).

Residues 1-11 (MMTNRRFRKPS) are Cytoplasmic-facing. The helical transmembrane segment at 12–29 (AWRLLLLLLPLVVLLSMS) threads the bilayer. The Periplasmic portion of the chain corresponds to 30–117 (SRRLPDEVML…SNGTSPVTRS (88 aa)).

This sequence belongs to the MzrA family. In terms of assembly, interacts with EnvZ.

It is found in the cell inner membrane. In terms of biological role, modulates the activity of the EnvZ/OmpR two-component regulatory system, probably by directly modulating EnvZ enzymatic activity and increasing stability of phosphorylated OmpR. The protein is Modulator protein MzrA of Dickeya dadantii (strain 3937) (Erwinia chrysanthemi (strain 3937)).